Here is a 114-residue protein sequence, read N- to C-terminus: Hydrogenase maturation factor HypA (114 aa).

His-2 contacts Ni(2+). Cys-73, Cys-76, Cys-89, and Cys-92 together coordinate Zn(2+).

Belongs to the HypA/HybF family.

In terms of biological role, involved in the maturation of [NiFe] hydrogenases. Required for nickel insertion into the metal center of the hydrogenase. The polypeptide is Hydrogenase maturation factor HypA (Syntrophus aciditrophicus (strain SB)).